We begin with the raw amino-acid sequence, 238 residues long: Cysteine-rich venom protein (238 aa).

The first 19 residues, 1–19 (MIAFIVLLSLAAVLQQSSG), serve as a signal peptide directing secretion. Positions 38-164 (VDKHNALRRS…STKYLYVCQY (127 aa)) constitute an SCP domain. Disulfide bonds link cysteine 75/cysteine 153, cysteine 92/cysteine 165, cysteine 148/cysteine 162, cysteine 184/cysteine 191, cysteine 187/cysteine 196, cysteine 200/cysteine 233, cysteine 209/cysteine 227, and cysteine 218/cysteine 231. The region spanning 200 to 233 (CKYEDAFTNCKALAKKTKCKTEWIKSKCPATCFC) is the ShKT domain.

It belongs to the CRISP family. As to expression, expressed by the venom gland.

The protein resides in the secreted. Its function is as follows. Blocks contraction of smooth muscle elicited by high potassium-induced depolarization, but does not block caffeine-stimulated contraction. May target voltage-gated calcium channels on smooth muscle. The chain is Cysteine-rich venom protein from Austrelaps superbus (Lowland copperhead snake).